We begin with the raw amino-acid sequence, 477 residues long: (R)-2-hydroxyglutaryl-CoA dehydratase, subunit alpha (477 aa).

It belongs to the FldB/FldC dehydratase alpha/beta subunit family. The (R)-2-hydroxyglutaryl-CoA dehydratase enzyme system is a heterodimer composed of an alpha subunit (HgdA) and a beta subunit (HgdB). It depends on [4Fe-4S] cluster as a cofactor. The cofactor is FMN. Mg(2+) serves as cofactor.

The protein resides in the cytoplasm. The enzyme catalyses (R)-2-hydroxyglutaryl-CoA = (2E)-glutaconyl-CoA + H2O. Its pathway is amino-acid degradation; L-glutamate degradation via hydroxyglutarate pathway; crotonoyl-CoA from L-glutamate: step 4/5. Activated by the HgdC. Reversibly inactivated by oxidants such as 2-nitrophenol, 3-nitrophenol, 4-nitrophenol, 4-nitrobenzoate, carbonyl cyanide 4-(trifluoromethoxy)phenylhydrazone (FCCP) and chloramphenicol. Irreversibly inactivated by oxidants such as hydroxylamine and nitrite. Functionally, involved in the fermentation of L-glutamate via the hydroxyglutarate pathway. Catalyzes the reversible syn-elimination of water from (R)-2-hydroxyglutaryl-CoA to yield (E)-glutaconyl-CoA. The dehydration mechanism involves a transient one electron reduction of the thioester from (R)-2-hydroxyglutaryl-CoA, generating a ketyl radical. Prior to (E)-glutaconyl-CoA formation, the ketyl radical is subsequently reoxidized by electron transfer back to the HgdA-HgdB complex (CompD) to avoid change in oxidation state of the substrate. The appropriate redox state of dehydratase HgdA-HgdB complex (CompD) is maintained by HgdC (CompA) via hydrolysis of ATP and ATP-dependent electron transfer. Since the electron is recycled, the dehydratase is able to perform several turnovers with only catalytic amounts of ATP and substoichiometric amounts of HgdC (CompA). This chain is (R)-2-hydroxyglutaryl-CoA dehydratase, subunit alpha, found in Acidaminococcus fermentans (strain ATCC 25085 / DSM 20731 / CCUG 9996 / CIP 106432 / VR4).